A 233-amino-acid polypeptide reads, in one-letter code: Inner kinetochore subunit fta4 (233 aa).

Phosphothreonine occurs at positions 189 and 191.

The protein belongs to the NKP1 family. Component of the inner kinetochore constitutive centromere-associated network (CCAN) (also known as central kinetochore Sim4 complex in fission yeast), which is composed of at least cnl2, cnp3, cnp20, fta1, fta2, fta3, fta4, fta6, fta7, mal2, mhf1, mhf2, mis6, mis15, mis17, sim4 and wip1.

The protein localises to the nucleus. It is found in the chromosome. The protein resides in the centromere. Its subcellular location is the kinetochore. Functionally, component of the kinetochore, a multiprotein complex that assembles on centromeric DNA and attaches chromosomes to spindle microtubules, mediating chromosome segregation and sister chromatid segregation during meiosis and mitosis. Component of the inner kinetochore constitutive centromere-associated network (CCAN), which serves as a structural platform for outer kinetochore assembly. Fta2, fta3 and fta4 associate with the central core (cnt) and inner repeat (inr) region of the centromere. The sequence is that of Inner kinetochore subunit fta4 (fta4) from Schizosaccharomyces pombe (strain 972 / ATCC 24843) (Fission yeast).